The primary structure comprises 271 residues: Acetylglutamate kinase (271 aa).

Substrate is bound by residues 41–42, arginine 63, and asparagine 166; that span reads GG.

It belongs to the acetylglutamate kinase family. ArgB subfamily.

The protein localises to the cytoplasm. The enzyme catalyses N-acetyl-L-glutamate + ATP = N-acetyl-L-glutamyl 5-phosphate + ADP. It participates in amino-acid biosynthesis; L-arginine biosynthesis; N(2)-acetyl-L-ornithine from L-glutamate: step 2/4. Its function is as follows. Catalyzes the ATP-dependent phosphorylation of N-acetyl-L-glutamate. This chain is Acetylglutamate kinase, found in Anaeromyxobacter sp. (strain Fw109-5).